Here is a 206-residue protein sequence, read N- to C-terminus: Peptidyl-tRNA hydrolase (206 aa).

Tyrosine 19 contacts tRNA. The Proton acceptor role is filled by histidine 24. The tRNA site is built by tyrosine 70, asparagine 72, and asparagine 118.

This sequence belongs to the PTH family. In terms of assembly, monomer.

The protein resides in the cytoplasm. It catalyses the reaction an N-acyl-L-alpha-aminoacyl-tRNA + H2O = an N-acyl-L-amino acid + a tRNA + H(+). Functionally, hydrolyzes ribosome-free peptidyl-tRNAs (with 1 or more amino acids incorporated), which drop off the ribosome during protein synthesis, or as a result of ribosome stalling. In terms of biological role, catalyzes the release of premature peptidyl moieties from peptidyl-tRNA molecules trapped in stalled 50S ribosomal subunits, and thus maintains levels of free tRNAs and 50S ribosomes. In Prochlorococcus marinus (strain MIT 9313), this protein is Peptidyl-tRNA hydrolase.